The sequence spans 222 residues: UPF0502 protein Shewmr7_1629 (222 aa).

The protein belongs to the UPF0502 family.

The sequence is that of UPF0502 protein Shewmr7_1629 from Shewanella sp. (strain MR-7).